Here is a 116-residue protein sequence, read N- to C-terminus: Large ribosomal subunit protein bL17 (116 aa).

Belongs to the bacterial ribosomal protein bL17 family. Part of the 50S ribosomal subunit. Contacts protein L32.

This chain is Large ribosomal subunit protein bL17, found in Aliarcobacter butzleri (strain RM4018) (Arcobacter butzleri).